The primary structure comprises 38 residues: Photosystem II reaction center protein L (38 aa).

Residues 17–37 (SLYWGLLLIFVLAILFSSYIF) form a helical membrane-spanning segment.

It belongs to the PsbL family. As to quaternary structure, PSII is composed of 1 copy each of membrane proteins PsbA, PsbB, PsbC, PsbD, PsbE, PsbF, PsbH, PsbI, PsbJ, PsbK, PsbL, PsbM, PsbT, PsbX, PsbY, PsbZ, Psb30/Ycf12, at least 3 peripheral proteins of the oxygen-evolving complex and a large number of cofactors. It forms dimeric complexes.

The protein resides in the plastid. It localises to the chloroplast thylakoid membrane. Its function is as follows. One of the components of the core complex of photosystem II (PSII). PSII is a light-driven water:plastoquinone oxidoreductase that uses light energy to abstract electrons from H(2)O, generating O(2) and a proton gradient subsequently used for ATP formation. It consists of a core antenna complex that captures photons, and an electron transfer chain that converts photonic excitation into a charge separation. This subunit is found at the monomer-monomer interface and is required for correct PSII assembly and/or dimerization. The protein is Photosystem II reaction center protein L of Nephroselmis olivacea (Green alga).